Here is a 489-residue protein sequence, read N- to C-terminus: Glutamyl-tRNA(Gln) amidotransferase subunit A (489 aa).

Residues Lys-77 and Ser-152 each act as charge relay system in the active site. Catalysis depends on Ser-176, which acts as the Acyl-ester intermediate.

The protein belongs to the amidase family. GatA subfamily. Heterotrimer of A, B and C subunits.

The enzyme catalyses L-glutamyl-tRNA(Gln) + L-glutamine + ATP + H2O = L-glutaminyl-tRNA(Gln) + L-glutamate + ADP + phosphate + H(+). Functionally, allows the formation of correctly charged Gln-tRNA(Gln) through the transamidation of misacylated Glu-tRNA(Gln) in organisms which lack glutaminyl-tRNA synthetase. The reaction takes place in the presence of glutamine and ATP through an activated gamma-phospho-Glu-tRNA(Gln). This chain is Glutamyl-tRNA(Gln) amidotransferase subunit A, found in Levilactobacillus brevis (strain ATCC 367 / BCRC 12310 / CIP 105137 / JCM 1170 / LMG 11437 / NCIMB 947 / NCTC 947) (Lactobacillus brevis).